The following is a 252-amino-acid chain: Large ribosomal subunit protein uL4 (252 aa).

It belongs to the universal ribosomal protein uL4 family. As to quaternary structure, part of the 50S ribosomal subunit.

Its function is as follows. One of the primary rRNA binding proteins, this protein initially binds near the 5'-end of the 23S rRNA. It is important during the early stages of 50S assembly. It makes multiple contacts with different domains of the 23S rRNA in the assembled 50S subunit and ribosome. Functionally, forms part of the polypeptide exit tunnel. This chain is Large ribosomal subunit protein uL4, found in Archaeoglobus fulgidus (strain ATCC 49558 / DSM 4304 / JCM 9628 / NBRC 100126 / VC-16).